The following is a 572-amino-acid chain: Oxygen-dependent choline dehydrogenase (572 aa).

Residue 9–38 (DYVIIGGGSAGSVLGARLSEDKDKNVLVLE) coordinates FAD. His-477 acts as the Proton acceptor in catalysis.

The protein belongs to the GMC oxidoreductase family. FAD serves as cofactor.

The enzyme catalyses choline + A = betaine aldehyde + AH2. It carries out the reaction betaine aldehyde + NAD(+) + H2O = glycine betaine + NADH + 2 H(+). The protein operates within amine and polyamine biosynthesis; betaine biosynthesis via choline pathway; betaine aldehyde from choline (cytochrome c reductase route): step 1/1. Functionally, involved in the biosynthesis of the osmoprotectant glycine betaine. Catalyzes the oxidation of choline to betaine aldehyde and betaine aldehyde to glycine betaine at the same rate. This chain is Oxygen-dependent choline dehydrogenase, found in Staphylococcus epidermidis (strain ATCC 35984 / DSM 28319 / BCRC 17069 / CCUG 31568 / BM 3577 / RP62A).